The sequence spans 261 residues: Receptor expression-enhancing protein 4 (261 aa).

2 consecutive transmembrane segments (helical) span residues 1 to 21 (MVSW…YPAY) and 35 to 55 (YVRW…ETFT). Positions 177-261 (ELHRRPIGYP…KKPAQSEPEN (85 aa)) are disordered. Over residues 191 to 202 (ADSDSMDERWSD) the composition is skewed to basic and acidic residues.

The protein belongs to the DP1 family. Interacts with microtubules. In terms of tissue distribution, during gastrulation, expressed on the dorsal side of the embryo and then in the neural plate and neural tube. At tailbud stages, expressed in the somites. Expressed in the neural tube later in development.

Its subcellular location is the endoplasmic reticulum membrane. Its function is as follows. Microtubule-binding protein required to ensure proper cell division and nuclear envelope reassembly by sequestering the endoplasmic reticulum away from chromosomes during mitosis. Probably acts by clearing the endoplasmic reticulum membrane from metaphase chromosomes. May play a role in the maintenance of both the nervous system and the musculature. The protein is Receptor expression-enhancing protein 4 (reep4) of Xenopus tropicalis (Western clawed frog).